Reading from the N-terminus, the 175-residue chain is NADH-ubiquinone oxidoreductase chain 6 (175 aa).

The next 5 membrane-spanning stretches (helical) occupy residues 1 to 21 (MMLY…VGFS), 25 to 45 (SPIY…GIVL), 47 to 67 (FGGS…MMVV), 88 to 108 (AVLG…YYVL), and 149 to 169 (YGTW…VVIM).

This sequence belongs to the complex I subunit 6 family. As to quaternary structure, core subunit of respiratory chain NADH dehydrogenase (Complex I) which is composed of 45 different subunits.

It localises to the mitochondrion inner membrane. The catalysed reaction is a ubiquinone + NADH + 5 H(+)(in) = a ubiquinol + NAD(+) + 4 H(+)(out). In terms of biological role, core subunit of the mitochondrial membrane respiratory chain NADH dehydrogenase (Complex I) which catalyzes electron transfer from NADH through the respiratory chain, using ubiquinone as an electron acceptor. Essential for the catalytic activity and assembly of complex I. The polypeptide is NADH-ubiquinone oxidoreductase chain 6 (MT-ND6) (Bos mutus grunniens (Wild yak)).